Reading from the N-terminus, the 418-residue chain is Xanthosine permease (418 aa).

At 1–9 (MSIAMRLKV) the chain is on the cytoplasmic side. A helical transmembrane segment spans residues 10 to 30 (MSFLQYFIWGSWLVTLGSYMI). Over 31-41 (NTLHFTGANVG) the chain is Periplasmic. A helical membrane pass occupies residues 42–62 (MVYSSKGIAAIIMPGIMGIIA). Residues 63–70 (DKWLRAER) are Cytoplasmic-facing. 2 helical membrane passes run 71–91 (AYMLCHLVCAGVLFYAASVTD) and 92–112 (PDMMFWVMLVNAMAFMPTIAL). Topologically, residues 113-136 (SNSVSYSCLAQAGLDPVTAFPPIR) are cytoplasmic. Residues 137–157 (VFGTVGFIVAMWAVSLLHLEL) form a helical membrane-spanning segment. At 158–159 (SS) the chain is on the periplasmic side. A helical transmembrane segment spans residues 160-180 (LQLYIASGASLLLSAYALTLP). At 181–209 (KIPVAEKKATTSLASKLGLDAFVLFKNPR) the chain is on the cytoplasmic side. A helical membrane pass occupies residues 210-230 (MAIFFLFAMMLGAVLQITNVF). Topologically, residues 231–254 (GNPFLHDFARNPEFADSFVVKYPS) are periplasmic. A helical transmembrane segment spans residues 255-275 (ILLSVSQMAEVGFILTIPFFL). At 276-277 (KR) the chain is on the cytoplasmic side. Residues 278-298 (FGIKTVMLMSMVAWTLRFGFF) traverse the membrane as a helical segment. At 299 to 306 (AYGDPSTT) the chain is on the periplasmic side. A helical membrane pass occupies residues 307–327 (GFILLLLSMIVYGCAFDFFNI). The Cytoplasmic segment spans residues 328-348 (SGSVFVEQEVDSSIRASAQGL). A helical transmembrane segment spans residues 349–369 (FMTMVNGVGAWVGSILSGMAV). Over 370–381 (DYFSVDGVKDWQ) the chain is Periplasmic. A helical transmembrane segment spans residues 382–402 (TIWLVFAGYALFLAVIFFFGF). At 403 to 418 (KYNHDPEKIKHRAVTH) the chain is on the cytoplasmic side.

It belongs to the major facilitator superfamily. Nucleoside:H(+) symporter (NHS) (TC 2.A.1.10) family.

The protein localises to the cell inner membrane. It carries out the reaction xanthosine(in) + H(+)(in) = xanthosine(out) + H(+)(out). Transport is abolished by the proton uncoupler 2,4-dinitrophenol. Functionally, uptake of xanthosine. Can also transport other nucleosides such as inosine, adenosine, cytidine, uridine and thymidine. Transport is driven by a proton motive force. The protein is Xanthosine permease of Escherichia coli (strain K12).